A 203-amino-acid polypeptide reads, in one-letter code: Thymidylate kinase (203 aa).

14–21 lines the ATP pocket; it reads GGEGIGKS.

Belongs to the thymidylate kinase family.

It catalyses the reaction dTMP + ATP = dTDP + ADP. Functionally, phosphorylation of dTMP to form dTDP in both de novo and salvage pathways of dTTP synthesis. The protein is Thymidylate kinase of Rickettsia peacockii (strain Rustic).